A 514-amino-acid chain; its full sequence is Peptide chain release factor 3 (514 aa).

The region spanning 8-268 (KKRRTFAIIS…TFLEFAPEPH (261 aa)) is the tr-type G domain. Residues 17 to 24 (SHPDAGKT), 85 to 89 (DTPGH), and 139 to 142 (NKLD) contribute to the GTP site.

The protein belongs to the TRAFAC class translation factor GTPase superfamily. Classic translation factor GTPase family. PrfC subfamily.

The protein resides in the cytoplasm. Increases the formation of ribosomal termination complexes and stimulates activities of RF-1 and RF-2. It binds guanine nucleotides and has strong preference for UGA stop codons. It may interact directly with the ribosome. The stimulation of RF-1 and RF-2 is significantly reduced by GTP and GDP, but not by GMP. This is Peptide chain release factor 3 from Streptococcus pyogenes serotype M49 (strain NZ131).